A 157-amino-acid polypeptide reads, in one-letter code: Mannose-specific lectin (157 aa).

The segment at residues 1–19 (MAKASLLILAAIFLGVITP) is a signal peptide (or 23; in 70% of the molecules). The 109-residue stretch at 24-132 (DNILYSGETL…DRWATGTHTG (109 aa)) folds into the Bulb-type lectin domain. 22 residues coordinate alpha-D-mannopyranose: Gln-49, Asp-51, Asn-53, Tyr-57, Asp-60, Lys-61, Trp-64, Ala-65, Asn-67, Gln-80, Asp-82, Asn-84, Tyr-88, Ile-95, Trp-96, Asn-99, Asn-106, Gln-112, Asp-114, Asn-116, Tyr-120, and Trp-125. A disulfide bridge connects residues Cys-52 and Cys-75. Positions 129-157 (THTGLVGIPASPPSEKYPTAGKIKLVTAK) are cleaved as a propeptide — removed in mature form.

In terms of assembly, homotetramer.

It is found in the secreted. In terms of biological role, mannose-specific lectin which binds alpha-D-linked mannose. Displays a high affinity for alpha-(1-3)-mannose oligomers. Displays antiviral activity and therefore may contribute to defense against infections. This Galanthus nivalis (Common snowdrop) protein is Mannose-specific lectin.